Reading from the N-terminus, the 53-residue chain is Ovomucoid (53 aa).

Positions 3–53 (VDCSEYPQPTCTTEHRPVCGSNNETYGNKCNFCNAVVKSNGTLTVSHFGKC) constitute a Kazal-like domain. 3 disulfide bridges follow: C5–C35, C13–C32, and C21–C53. Residue N42 is glycosylated (N-linked (GlcNAc...) asparagine).

It is found in the secreted. The chain is Ovomucoid from Polyplectron bicalcaratum (Grey peacock-pheasant).